A 278-amino-acid polypeptide reads, in one-letter code: Tryptophan synthase alpha chain (278 aa).

Catalysis depends on proton acceptor residues Glu50 and Asp61.

This sequence belongs to the TrpA family. Tetramer of two alpha and two beta chains.

The catalysed reaction is (1S,2R)-1-C-(indol-3-yl)glycerol 3-phosphate + L-serine = D-glyceraldehyde 3-phosphate + L-tryptophan + H2O. Its pathway is amino-acid biosynthesis; L-tryptophan biosynthesis; L-tryptophan from chorismate: step 5/5. Its function is as follows. The alpha subunit is responsible for the aldol cleavage of indoleglycerol phosphate to indole and glyceraldehyde 3-phosphate. This Rhodopseudomonas palustris (strain HaA2) protein is Tryptophan synthase alpha chain.